We begin with the raw amino-acid sequence, 459 residues long: tRNA modification GTPase MnmE (459 aa).

Arg-22, Glu-85, and Arg-124 together coordinate (6S)-5-formyl-5,6,7,8-tetrahydrofolate. In terms of domain architecture, TrmE-type G spans 221 to 380 (GLSTVIVGKP…LELQIRDLFF (160 aa)). K(+) is bound at residue Asn-231. Residues 231-236 (NVGKSS), 250-256 (TEVAGTT), and 275-278 (DTAG) contribute to the GTP site. Mg(2+) is bound at residue Ser-235. K(+) is bound by residues Thr-250, Val-252, and Thr-255. Residue Thr-256 participates in Mg(2+) binding. Lys-459 is a binding site for (6S)-5-formyl-5,6,7,8-tetrahydrofolate.

This sequence belongs to the TRAFAC class TrmE-Era-EngA-EngB-Septin-like GTPase superfamily. TrmE GTPase family. As to quaternary structure, homodimer. Heterotetramer of two MnmE and two MnmG subunits. Requires K(+) as cofactor.

Its subcellular location is the cytoplasm. Its function is as follows. Exhibits a very high intrinsic GTPase hydrolysis rate. Involved in the addition of a carboxymethylaminomethyl (cmnm) group at the wobble position (U34) of certain tRNAs, forming tRNA-cmnm(5)s(2)U34. The sequence is that of tRNA modification GTPase MnmE from Staphylococcus haemolyticus (strain JCSC1435).